A 351-amino-acid polypeptide reads, in one-letter code: Protein MSS2, mitochondrial (351 aa).

2 TPR repeats span residues 155–188 (HLTV…ENST) and 260–294 (KECF…MDLE).

As to quaternary structure, interacts with COX18.

It is found in the mitochondrion inner membrane. Required to stabilize mitochondrial cytochrome C oxidase subunit 2 (COX2) and to translocate the C-terminal domain of COX2 through the inner membrane. The protein is Protein MSS2, mitochondrial (MSS2) of Saccharomyces cerevisiae (strain ATCC 204508 / S288c) (Baker's yeast).